Consider the following 421-residue polypeptide: 5-hydroxytryptamine receptor 1A (421 aa).

Over 1 to 38 (MDMFSLGQGNNTTTSLEPFGTGGNDTGLSNVTFSYQVI) the chain is Extracellular. N-linked (GlcNAc...) asparagine glycans are attached at residues Asn10, Asn11, Asn24, and Asn30. A helical transmembrane segment spans residues 39 to 59 (TSLLLGTLIFCAVLGNACVVA). Residues 60–73 (AIALERSLQNVANY) are Cytoplasmic-facing. Residues 74–98 (LIGSLAVTDLMVSVLVLPMAALYQV) traverse the membrane as a helical segment. Residues 99 to 107 (LNKWTLGQV) lie on the Extracellular side of the membrane. A helical membrane pass occupies residues 108-132 (TCDLFIALDVLCCTSSILHLCAIAL). A disulfide bridge connects residues Cys109 and Cys187. Serotonin-binding residues include Asp116 and Cys120. A DRY motif; important for ligand-induced conformation changes motif is present at residues 133-135 (DRY). At 133–152 (DRYWAITDPIDYVNKRTPRR) the chain is on the cytoplasmic side. The chain crosses the membrane as a helical span at residues 153 to 174 (AAALISLTWLIGFLISIPPMLG). Residues 175-193 (WRTPEDRSNPNECTISKDH) are Extracellular-facing. A helical transmembrane segment spans residues 194–216 (GYTIYSTFGAFYIPLLLMLVLYG). The Cytoplasmic portion of the chain corresponds to 217 to 346 (RIFRAARFRI…LARERKTVKT (130 aa)). A disordered region spans residues 237-268 (GAGTSFGTSSAPPPKKSLNGQPGSGDCRRSAE). Thr314, Lys345, Thr346, and Gly352 together coordinate 1D-myo-inositol 4-phosphate. A helical transmembrane segment spans residues 347-370 (LGIIMGTFILCWLPFFIVALVLPF). At 371–378 (CESSCHMP) the chain is on the extracellular side. The helical transmembrane segment at 379-403 (ELLGAIINWLGYSNSLLNPVIYAYF) threads the bilayer. The NPxxY motif; important for ligand-induced conformation changes and signaling motif lies at 396 to 400 (NPVIY). 3 residues coordinate 1D-myo-inositol 4-phosphate: Phe403, Asn404, and Lys405. The Cytoplasmic portion of the chain corresponds to 404 to 421 (NKDFQNAFKKIIKCKFCR).

This sequence belongs to the G-protein coupled receptor 1 family. 5-hydroxytryptamine receptor subfamily. HTR1A sub-subfamily. In terms of assembly, heterodimer; heterodimerizes with GPER1. Interacts with YIF1B. Interacts with GPR39 and GALR1. As to expression, most abundantly expressed in midbrain, in dorsal raphe and hippocampus. Detected at lower levels in amygdala and brain cortex.

The protein resides in the cell membrane. It localises to the cell projection. It is found in the dendrite. G-protein coupled receptor activity is regulated by lipids: phosphatidylinositol 4-phosphate increases HTR1A-mediated activity. Plays a role in the regulation of dopamine and 5-hydroxytryptamine levels in the brain, and thereby affects neural activity, mood and behavior. Plays a role in the response to anxiogenic stimuli. Functionally, G-protein coupled receptor for 5-hydroxytryptamine (serotonin). Also functions as a receptor for various drugs and psychoactive substances. Ligand binding causes a conformation change that triggers signaling via guanine nucleotide-binding proteins (G proteins) and modulates the activity of downstream effectors, such as adenylate cyclase. HTR1A is coupled to G(i)/G(o) G alpha proteins and mediates inhibitory neurotransmission: signaling inhibits adenylate cyclase activity and activates a phosphatidylinositol-calcium second messenger system that regulates the release of Ca(2+) ions from intracellular stores. Beta-arrestin family members regulate signaling by mediating both receptor desensitization and resensitization processes. The polypeptide is 5-hydroxytryptamine receptor 1A (Htr1a) (Mus musculus (Mouse)).